Here is a 334-residue protein sequence, read N- to C-terminus: Cytoskeleton protein RodZ (334 aa).

Topologically, residues 1–111 (MNTEATHDQN…LGKRRKKRDG (111 aa)) are cytoplasmic. Positions 19–71 (LRNAREQLGLSQQAVAERLCLKVSTVRDIEEDKAPSDLASTFLRGYIRSYARL) constitute an HTH cro/C1-type domain. A DNA-binding region (H-T-H motif) is located at residues 30–49 (QQAVAERLCLKVSTVRDIEE). A helical; Signal-anchor for type II membrane protein transmembrane segment spans residues 112 to 132 (WLMSFTWLVLFVVVGLTGAWW). The Periplasmic portion of the chain corresponds to 133-334 (WQNHKAQQEE…TLNAEPTPAQ (202 aa)). Residues 155-241 (NADKDSGQSV…PSALPTSQAG (87 aa)) form a disordered region. Composition is skewed to low complexity over residues 170 to 211 (AATS…TVVA) and 219 to 241 (TAAT…SQAG).

It belongs to the RodZ family.

It is found in the cell inner membrane. Cytoskeletal protein that is involved in cell-shape control through regulation of the length of the long axis. In Salmonella agona (strain SL483), this protein is Cytoskeleton protein RodZ.